The chain runs to 217 residues: Probable GTP-binding protein EngB (217 aa).

The EngB-type G domain maps to 37–214 (AGVEVAFAGR…RAAMARLIGE (178 aa)). GTP is bound by residues 45 to 52 (GRSNVGKS), 72 to 76 (GRTQE), 92 to 95 (DMPG), 159 to 162 (TKAD), and 193 to 195 (TSS). Mg(2+) contacts are provided by Ser52 and Thr74.

The protein belongs to the TRAFAC class TrmE-Era-EngA-EngB-Septin-like GTPase superfamily. EngB GTPase family. Requires Mg(2+) as cofactor.

Functionally, necessary for normal cell division and for the maintenance of normal septation. The chain is Probable GTP-binding protein EngB from Nitrobacter hamburgensis (strain DSM 10229 / NCIMB 13809 / X14).